The chain runs to 364 residues: Transcription factor IIIA (364 aa).

9 C2H2-type zinc fingers span residues 38–62 (FICSFPDCSASYNKAWKLDAHLCKH), 68–92 (FVCDYEGCGKAFIRDYHLSRHVLIH), 98–123 (FVCADDGCNQKFNTKSNLKKHIERKH), 130–154 (YVCSYEGCKKAFKKHQQLRTHQCQH), 160–184 (FRCTHEGCGKHFASPSRLKRHGKVH), 187–211 (YLCQKGCSFMGKTWTELLKHMREAH), 215–237 (ITCNVCQRMFKRRDYLKQHMKTH), 244–269 (YRCPRQGCGRTYTTVFNLQSHILSFH), and 275–299 (FVCEHAGCGKTFAMKQSLMRHSVVH). The tract at residues 299–364 (HDPDKKRMKL…PPPAALLTVC (66 aa)) is disordered. The segment covering 338-352 (SLPNASAESSSSPEA) has biased composition (low complexity).

It is found in the nucleus. Involved in ribosomal large subunit biogenesis. Binds the approximately 50 base pairs internal control region (ICR) of 5S ribosomal RNA genes. It is required for their RNA polymerase III-dependent transcription and may also maintain the transcription of other genes. Also binds the transcribed 5S RNA's. This is Transcription factor IIIA (Gtf3a) from Mus musculus (Mouse).